The chain runs to 808 residues: ATP-dependent 6-phosphofructokinase (808 aa).

The tract at residues 1 to 21 (MSSTQAPVEPPKRRRIGVLTS) is disordered. Positions 1–389 (MSSTQAPVEP…YHFAYRNTAT (389 aa)) are N-terminal catalytic PFK domain 1. ATP is bound by residues Gly-23, 86–87 (RS), and 116–119 (GDGS). Position 117 (Asp-117) interacts with Mg(2+). Residues 162–164 (SID), Arg-199, 206–208 (MGR), Glu-263, Arg-291, and 297–300 (HTQR) contribute to the substrate site. Residue Asp-164 is the Proton acceptor of the active site. The interval 390–403 (PDHPKMILPQDKRM) is interdomain linker. Positions 404 to 808 (RIAIIHVGAP…DIDPSALTSS (405 aa)) are C-terminal regulatory PFK domain 2. Beta-D-fructose 2,6-bisphosphate contacts are provided by residues Arg-480, 537–541 (TISNN), Arg-575, 582–584 (QGG), Glu-642, Arg-668, 674–677 (HFQQ), and Arg-749.

It belongs to the phosphofructokinase type A (PFKA) family. ATP-dependent PFK group I subfamily. Eukaryotic two domain clade 'E' sub-subfamily. As to quaternary structure, homotetramer. Mg(2+) is required as a cofactor.

It is found in the cytoplasm. The enzyme catalyses beta-D-fructose 6-phosphate + ATP = beta-D-fructose 1,6-bisphosphate + ADP + H(+). Its pathway is carbohydrate degradation; glycolysis; D-glyceraldehyde 3-phosphate and glycerone phosphate from D-glucose: step 3/4. With respect to regulation, allosterically activated by ADP, AMP, or fructose 2,6-bisphosphate, and allosterically inhibited by ATP or citrate. Its function is as follows. Catalyzes the phosphorylation of D-fructose 6-phosphate to fructose 1,6-bisphosphate by ATP, the first committing step of glycolysis. This is ATP-dependent 6-phosphofructokinase (pfkA) from Aspergillus fumigatus (strain ATCC MYA-4609 / CBS 101355 / FGSC A1100 / Af293) (Neosartorya fumigata).